We begin with the raw amino-acid sequence, 596 residues long: Succinate dehydrogenase flavoprotein subunit (596 aa).

Residues 18-23 (GAGGAG), 41-56 (SKLF…AQGG), and Asp-225 each bind FAD. Tele-8alpha-FAD histidine is present on His-49. Residues His-246 and Thr-258 each coordinate substrate. Arg-290 functions as the Proton acceptor in the catalytic mechanism. His-357 contacts substrate. Glu-391 provides a ligand contact to FAD. Arg-402 contacts substrate. 407–408 (SL) contributes to the FAD binding site.

Belongs to the FAD-dependent oxidoreductase 2 family. FRD/SDH subfamily. Part of an enzyme complex containing four subunits: a flavoprotein, an iron-sulfur, cytochrome b-556, and a hydrophobic anchor protein. FAD is required as a cofactor.

The protein localises to the cell inner membrane. It carries out the reaction a quinone + succinate = fumarate + a quinol. It participates in carbohydrate metabolism; tricarboxylic acid cycle; fumarate from succinate (bacterial route): step 1/1. The chain is Succinate dehydrogenase flavoprotein subunit (sdhA) from Rickettsia bellii (strain RML369-C).